The chain runs to 315 residues: Putative pyruvate, phosphate dikinase regulatory protein (315 aa).

The interval 1-32 is disordered; sequence MGPFGARASPEAGQVVKQPLTDDPQESLAQGE. 189–196 is a binding site for ADP; the sequence is GVSRTSKT.

The protein belongs to the pyruvate, phosphate/water dikinase regulatory protein family. PDRP subfamily.

It carries out the reaction N(tele)-phospho-L-histidyl/L-threonyl-[pyruvate, phosphate dikinase] + ADP = N(tele)-phospho-L-histidyl/O-phospho-L-threonyl-[pyruvate, phosphate dikinase] + AMP + H(+). The enzyme catalyses N(tele)-phospho-L-histidyl/O-phospho-L-threonyl-[pyruvate, phosphate dikinase] + phosphate + H(+) = N(tele)-phospho-L-histidyl/L-threonyl-[pyruvate, phosphate dikinase] + diphosphate. Functionally, bifunctional serine/threonine kinase and phosphorylase involved in the regulation of the pyruvate, phosphate dikinase (PPDK) by catalyzing its phosphorylation/dephosphorylation. This is Putative pyruvate, phosphate dikinase regulatory protein from Caulobacter vibrioides (strain ATCC 19089 / CIP 103742 / CB 15) (Caulobacter crescentus).